Here is a 337-residue protein sequence, read N- to C-terminus: Glyceraldehyde-3-phosphate dehydrogenase (337 aa).

NAD(+) contacts are provided by residues 17–18 (RI), Asp39, Lys83, and Ser125. D-glyceraldehyde 3-phosphate contacts are provided by residues 156-158 (SCT), Thr187, Arg202, 215-216 (TG), and Arg238. Cys157 acts as the Nucleophile in catalysis. An NAD(+)-binding site is contributed by Asn319.

It belongs to the glyceraldehyde-3-phosphate dehydrogenase family. In terms of assembly, homotetramer.

Its subcellular location is the cytoplasm. It carries out the reaction D-glyceraldehyde 3-phosphate + phosphate + NAD(+) = (2R)-3-phospho-glyceroyl phosphate + NADH + H(+). It participates in carbohydrate degradation; glycolysis; pyruvate from D-glyceraldehyde 3-phosphate: step 1/5. Functionally, catalyzes the oxidative phosphorylation of glyceraldehyde 3-phosphate (G3P) to 1,3-bisphosphoglycerate (BPG) using the cofactor NAD. The first reaction step involves the formation of a hemiacetal intermediate between G3P and a cysteine residue, and this hemiacetal intermediate is then oxidized to a thioester, with concomitant reduction of NAD to NADH. The reduced NADH is then exchanged with the second NAD, and the thioester is attacked by a nucleophilic inorganic phosphate to produce BPG. The protein is Glyceraldehyde-3-phosphate dehydrogenase (gapA) of Mycoplasma genitalium (strain ATCC 33530 / DSM 19775 / NCTC 10195 / G37) (Mycoplasmoides genitalium).